The sequence spans 432 residues: Probable protein phosphatase 2C 75 (432 aa).

One can recognise a PPM-type phosphatase domain in the interval 44 to 356 (VACLFTRQGK…DDCAVVCLFL (313 aa)). 4 residues coordinate Mn(2+): Asp-80, Gly-81, Asp-301, and Asp-347. The tract at residues 372–408 (SPRMPALSGITRPNSKRVTPDDVDDGSDSNVSGDERS) is disordered.

Belongs to the PP2C family. Mg(2+) is required as a cofactor. Mn(2+) serves as cofactor.

The catalysed reaction is O-phospho-L-seryl-[protein] + H2O = L-seryl-[protein] + phosphate. It catalyses the reaction O-phospho-L-threonyl-[protein] + H2O = L-threonyl-[protein] + phosphate. In Oryza sativa subsp. japonica (Rice), this protein is Probable protein phosphatase 2C 75.